Here is a 390-residue protein sequence, read N- to C-terminus: Cyclic amide hydrolase (390 aa).

The RU A stretch occupies residues 1–118; the sequence is MPNPEASLSP…TVVTQEWVAD (118 aa). Residues Arg66 and 97–98 each bind substrate; that span reads SG. An RU B region spans residues 127–268; the sequence is GLVVGRGHTE…GEVLLLANSA (142 aa). Residue Lys177 is part of the active site. Substrate-binding positions include Asn213, 251-252, Lys346, and 365-366; these read SS and SG. Ser251 serves as the catalytic Nucleophile. Residues 274 to 390 form an RU C region; the sequence is LRIGHGITRD…VAAVVRRLPA (117 aa).

It belongs to the cyclic amide hydrolase (CyAH) family. As to quaternary structure, homotetramer; disulfide-linked. The disulfide forms between 2 monomers in the tetramer, such that each tetramer contains 2 sets of vicinal disulfides.

Its function is as follows. Cyclic amide hydrolase of unknown substrate specificity. Catalyzes the hydrolytic ring-opening of a cyclic amide. Does not act on cyanuric acid nor barbituric acid. The sequence is that of Cyclic amide hydrolase from Pseudofrankia inefficax (strain DSM 45817 / CECT 9037 / DDB 130130 / EuI1c) (Frankia inefficax).